Here is a 714-residue protein sequence, read N- to C-terminus: Rho-GTPase-activating protein RGD2 (714 aa).

The F-BAR domain maps to 2–441 (LSFCDYFWSE…LENDIDPTAD (440 aa)). A DEP domain is found at 218 to 298 (PKTDYKLPLI…WKNTAYMFAN (81 aa)). Positions 475 to 704 (VDLETRCRLD…DLLTHKKQIF (230 aa)) constitute a Rho-GAP domain.

In terms of assembly, interacts with CDC42 and RHO5.

In terms of biological role, acts in signal transduction. Activates CDC42 and RHO5. In Saccharomyces cerevisiae (strain ATCC 204508 / S288c) (Baker's yeast), this protein is Rho-GTPase-activating protein RGD2 (RGD2).